The chain runs to 157 residues: Succinate dehydrogenase assembly factor 2-A, mitochondrial (157 aa).

The transit peptide at 1–21 directs the protein to the mitochondrion; the sequence is MLRQVLSSTSVRRLLVSPTRC.

It belongs to the SDHAF2 family. As to quaternary structure, interacts with the flavoprotein subunit within the SDH catalytic dimer.

The protein resides in the mitochondrion matrix. Its function is as follows. Plays an essential role in the assembly of succinate dehydrogenase (SDH), an enzyme complex (also referred to as respiratory complex II) that is a component of both the tricarboxylic acid (TCA) cycle and the mitochondrial electron transport chain, and which couples the oxidation of succinate to fumarate with the reduction of ubiquinone (coenzyme Q) to ubiquinol. Required for flavinylation (covalent attachment of FAD) of the flavoprotein subunit of the SDH catalytic dimer. This is Succinate dehydrogenase assembly factor 2-A, mitochondrial from Drosophila mojavensis (Fruit fly).